We begin with the raw amino-acid sequence, 308 residues long: D-alanine--D-alanine ligase (308 aa).

The region spanning Lys102–Glu302 is the ATP-grasp domain. Pro128–Thr183 contributes to the ATP binding site. Asp252, Glu269, and Asn271 together coordinate Mg(2+).

The protein belongs to the D-alanine--D-alanine ligase family. Mg(2+) serves as cofactor. It depends on Mn(2+) as a cofactor.

It localises to the cytoplasm. It carries out the reaction 2 D-alanine + ATP = D-alanyl-D-alanine + ADP + phosphate + H(+). It functions in the pathway cell wall biogenesis; peptidoglycan biosynthesis. Functionally, cell wall formation. The sequence is that of D-alanine--D-alanine ligase from Sinorhizobium medicae (strain WSM419) (Ensifer medicae).